A 462-amino-acid chain; its full sequence is A-type ATP synthase subunit B (462 aa).

This sequence belongs to the ATPase alpha/beta chains family. In terms of assembly, has multiple subunits with at least A(3), B(3), C, D, E, F, H, I and proteolipid K(x).

It is found in the cell membrane. Component of the A-type ATP synthase that produces ATP from ADP in the presence of a proton gradient across the membrane. The B chain is a regulatory subunit. This is A-type ATP synthase subunit B from Pyrococcus furiosus (strain ATCC 43587 / DSM 3638 / JCM 8422 / Vc1).